Reading from the N-terminus, the 261-residue chain is Cytochrome c oxidase subunit 3 (261 aa).

The Mitochondrial matrix portion of the chain corresponds to 1–15; the sequence is MTHQTHAYHMVNPSP. A helical transmembrane segment spans residues 16-34; it reads WPLTGALSALLMTSGLIMW. At 35-40 the chain is on the mitochondrial intermembrane side; that stretch reads FHFNST. Residues 41 to 66 traverse the membrane as a helical segment; that stretch reads TLLTLGLTTNMLTMYQWWRDVIREST. Over 67 to 72 the chain is Mitochondrial matrix; sequence FQGHHT. The helical transmembrane segment at 73 to 105 threads the bilayer; it reads PTVQKGLRYGMILFIISEVLFFTGFFWAFYHSS. The Mitochondrial intermembrane portion of the chain corresponds to 106–128; it reads LAPTPELGGCWPPTGIHPLNPLE. Residues 129–152 traverse the membrane as a helical segment; sequence VPLLNTSVLLASGVSITWAHHSLM. Residues 153–155 lie on the Mitochondrial matrix side of the membrane; sequence EGN. The helical transmembrane segment at 156 to 183 threads the bilayer; it reads RNPMLQALFITIALGIYFTLLQASEYYE. Topologically, residues 184 to 190 are mitochondrial intermembrane; sequence APFTISD. A helical transmembrane segment spans residues 191–223; the sequence is GVYGSTFFVATGFHGLHVIIGSTFLIVCFFRQL. Residues 224-232 lie on the Mitochondrial matrix side of the membrane; the sequence is KFHFTSNHH. A helical transmembrane segment spans residues 233–256; the sequence is FGFEAAAWYWHFVDVVWLFLYVSI. Residues 257–261 lie on the Mitochondrial intermembrane side of the membrane; it reads YWWGS.

This sequence belongs to the cytochrome c oxidase subunit 3 family. As to quaternary structure, component of the cytochrome c oxidase (complex IV, CIV), a multisubunit enzyme composed of 14 subunits. The complex is composed of a catalytic core of 3 subunits MT-CO1, MT-CO2 and MT-CO3, encoded in the mitochondrial DNA, and 11 supernumerary subunits COX4I, COX5A, COX5B, COX6A, COX6B, COX6C, COX7A, COX7B, COX7C, COX8 and NDUFA4, which are encoded in the nuclear genome. The complex exists as a monomer or a dimer and forms supercomplexes (SCs) in the inner mitochondrial membrane with NADH-ubiquinone oxidoreductase (complex I, CI) and ubiquinol-cytochrome c oxidoreductase (cytochrome b-c1 complex, complex III, CIII), resulting in different assemblies (supercomplex SCI(1)III(2)IV(1) and megacomplex MCI(2)III(2)IV(2)).

Its subcellular location is the mitochondrion inner membrane. The catalysed reaction is 4 Fe(II)-[cytochrome c] + O2 + 8 H(+)(in) = 4 Fe(III)-[cytochrome c] + 2 H2O + 4 H(+)(out). In terms of biological role, component of the cytochrome c oxidase, the last enzyme in the mitochondrial electron transport chain which drives oxidative phosphorylation. The respiratory chain contains 3 multisubunit complexes succinate dehydrogenase (complex II, CII), ubiquinol-cytochrome c oxidoreductase (cytochrome b-c1 complex, complex III, CIII) and cytochrome c oxidase (complex IV, CIV), that cooperate to transfer electrons derived from NADH and succinate to molecular oxygen, creating an electrochemical gradient over the inner membrane that drives transmembrane transport and the ATP synthase. Cytochrome c oxidase is the component of the respiratory chain that catalyzes the reduction of oxygen to water. Electrons originating from reduced cytochrome c in the intermembrane space (IMS) are transferred via the dinuclear copper A center (CU(A)) of subunit 2 and heme A of subunit 1 to the active site in subunit 1, a binuclear center (BNC) formed by heme A3 and copper B (CU(B)). The BNC reduces molecular oxygen to 2 water molecules using 4 electrons from cytochrome c in the IMS and 4 protons from the mitochondrial matrix. In Madoqua guentheri (Guenther's dik-dik), this protein is Cytochrome c oxidase subunit 3 (MT-CO3).